A 227-amino-acid polypeptide reads, in one-letter code: Urease accessory protein UreF (227 aa).

This sequence belongs to the UreF family. UreD, UreF and UreG form a complex that acts as a GTP-hydrolysis-dependent molecular chaperone, activating the urease apoprotein by helping to assemble the nickel containing metallocenter of UreC. The UreE protein probably delivers the nickel.

The protein resides in the cytoplasm. Its function is as follows. Required for maturation of urease via the functional incorporation of the urease nickel metallocenter. This Actinobacillus pleuropneumoniae (Haemophilus pleuropneumoniae) protein is Urease accessory protein UreF.